The primary structure comprises 691 residues: Elongation factor G (691 aa).

The tr-type G domain occupies 8–282 (ERVRNIGIAA…AVVDYLPAPI (275 aa)). GTP-binding positions include 17-24 (AHIDAGKT), 81-85 (DTPGH), and 135-138 (NKMD).

This sequence belongs to the TRAFAC class translation factor GTPase superfamily. Classic translation factor GTPase family. EF-G/EF-2 subfamily.

It localises to the cytoplasm. Its function is as follows. Catalyzes the GTP-dependent ribosomal translocation step during translation elongation. During this step, the ribosome changes from the pre-translocational (PRE) to the post-translocational (POST) state as the newly formed A-site-bound peptidyl-tRNA and P-site-bound deacylated tRNA move to the P and E sites, respectively. Catalyzes the coordinated movement of the two tRNA molecules, the mRNA and conformational changes in the ribosome. The polypeptide is Elongation factor G (Synechococcus sp. (strain CC9311)).